The primary structure comprises 112 residues: Citrate synthase (112 aa).

Catalysis depends on residues H39 and D97.

Belongs to the citrate synthase family.

The catalysed reaction is oxaloacetate + acetyl-CoA + H2O = citrate + CoA + H(+). Its pathway is carbohydrate metabolism; tricarboxylic acid cycle; isocitrate from oxaloacetate: step 1/2. The protein is Citrate synthase (gltA) of Bartonella vinsonii subsp. berkhoffii.